The sequence spans 726 residues: Ribonuclease R (726 aa).

Residues 264 to 592 form the RNB domain; that stretch reads RKDLTELAFV…TVHRLLWMNL (329 aa). In terms of domain architecture, S1 motif spans 645-726; the sequence is GQTFHGFISA…VQKRAILTLV (82 aa).

This sequence belongs to the RNR ribonuclease family. RNase R subfamily.

It is found in the cytoplasm. The enzyme catalyses Exonucleolytic cleavage in the 3'- to 5'-direction to yield nucleoside 5'-phosphates.. In terms of biological role, 3'-5' exoribonuclease that releases 5'-nucleoside monophosphates and is involved in maturation of structured RNAs. The polypeptide is Ribonuclease R (Mycoplasma pneumoniae (strain ATCC 29342 / M129 / Subtype 1) (Mycoplasmoides pneumoniae)).